Reading from the N-terminus, the 577-residue chain is MDRAVSQVALENDEREAKNTWRLIFRIAILLLTVVTLATSVASLVYSMGASTPSDLVGIPTRISRAEEKITSALGSNQDVVDRIYKQVALESPLALLNTETTIMNAITSLSYQINGAANNSGWGAPIHDPDFIGGIGKELIVDDASDVTSFYPSAFQEHHNFIPAPTTGSGCIRIPSFDMSATHYCYTHNIISSGCRDHSHSYQYLALGVLRTSATGRIFFSTLRSINLDDTQNRKSCSVSATPLGCDMLCSKVTETEEEDYNSAVPTLMVHGRLGFDGQYHEKDLDVTTLFEDWVANYPGVGGGSFIDSRVWFSVYGGLKPNSPSDTVQEEKYVIYKRYNDTCPDEQDYQIRMAKSSYKPGRFGGKRIQQAILSIKVSTSLGEDPVLTVPPNTVTLMGAEGRILTVGTSHFLYQRGSSYFSPALLYPMTVSNKTATLHSPYTFNAFTRPGSIPCQASARCPNSCVTGVYTDPYPLIFYRNHTLRGVFGTMLDGEQARLNPASAVFDSTSRSRITRVSSSSTKAAYTTSTCFKVVKTNKTYCLSIAEISNTLFGEFRIVPLLVEILKNDGVREARSG.

Over 1 to 26 (MDRAVSQVALENDEREAKNTWRLIFR) the chain is Intravirion. The chain crosses the membrane as a helical span at residues 27–47 (IAILLLTVVTLATSVASLVYS). Over 48–577 (MGASTPSDLV…NDGVREARSG (530 aa)) the chain is Virion surface. N119 carries an N-linked (GlcNAc...) asparagine; by host glycan. The segment at 124-152 (GAPIHDPDFIGGIGKELIVDDASDVTSFY) is important for interaction with fusion/F protein. Cystine bridges form between C172–C196, C186–C247, and C238–C251. The interval 234 to 239 (NRKSCS) is involved in neuraminidase activity. N341 and N433 each carry an N-linked (GlcNAc...) asparagine; by host glycan. Cystine bridges form between C344–C461 and C455–C465. N-linked (GlcNAc...) asparagine; by host glycosylation is found at N481 and N538. Residues C531 and C542 are joined by a disulfide bond.

This sequence belongs to the paramyxoviruses hemagglutinin-neuraminidase family. In terms of assembly, homotetramer; composed of disulfide-linked homodimers. Interacts with F protein trimer. Interacts with host CG-1B; this interaction inhibits viral adsorption and replication rather than internalization.

It localises to the virion membrane. It is found in the host cell membrane. The catalysed reaction is Hydrolysis of alpha-(2-&gt;3)-, alpha-(2-&gt;6)-, alpha-(2-&gt;8)- glycosidic linkages of terminal sialic acid residues in oligosaccharides, glycoproteins, glycolipids, colominic acid and synthetic substrates.. In terms of biological role, mediates the viral entry into the host cell together with fusion/F protein. Attaches the virus to sialic acid-containing cell receptors and thereby initiates infection. Binding of HN protein to the receptor induces a conformational change that allows the F protein to trigger virion/cell membranes fusion. Neuraminidase activity ensures the efficient spread of the virus by dissociating the mature virions from the neuraminic acid containing glycoproteins. This chain is Hemagglutinin-neuraminidase (HN), found in Gallus gallus (Chicken).